We begin with the raw amino-acid sequence, 431 residues long: Phosphoribosylamine--glycine ligase (431 aa).

Positions 109 to 316 constitute an ATP-grasp domain; the sequence is KDFLARHGIP…LVDLVEAAID (208 aa). 135-196 provides a ligand contact to ATP; sequence VREKGAPIVV…EEFLDGEEAS (62 aa). 2 residues coordinate Mg(2+): glutamate 286 and asparagine 288.

Belongs to the GARS family. Mg(2+) is required as a cofactor. Requires Mn(2+) as cofactor.

It carries out the reaction 5-phospho-beta-D-ribosylamine + glycine + ATP = N(1)-(5-phospho-beta-D-ribosyl)glycinamide + ADP + phosphate + H(+). It participates in purine metabolism; IMP biosynthesis via de novo pathway; N(1)-(5-phospho-D-ribosyl)glycinamide from 5-phospho-alpha-D-ribose 1-diphosphate: step 2/2. In Xanthomonas campestris pv. campestris (strain ATCC 33913 / DSM 3586 / NCPPB 528 / LMG 568 / P 25), this protein is Phosphoribosylamine--glycine ligase.